We begin with the raw amino-acid sequence, 297 residues long: N-acetylmannosamine kinase (297 aa).

ATP is bound by residues 5 to 12 and 132 to 139; these read ALDIGGTK and GVGGGIIL. Zn(2+)-binding residues include histidine 156, cysteine 166, cysteine 168, and cysteine 173.

It belongs to the ROK (NagC/XylR) family. NanK subfamily. As to quaternary structure, homodimer.

The enzyme catalyses an N-acyl-D-mannosamine + ATP = an N-acyl-D-mannosamine 6-phosphate + ADP + H(+). It functions in the pathway amino-sugar metabolism; N-acetylneuraminate degradation; D-fructose 6-phosphate from N-acetylneuraminate: step 2/5. Catalyzes the phosphorylation of N-acetylmannosamine (ManNAc) to ManNAc-6-P. In Pasteurella multocida (strain Pm70), this protein is N-acetylmannosamine kinase.